Reading from the N-terminus, the 162-residue chain is NADH-quinone oxidoreductase subunit I (162 aa).

4Fe-4S ferredoxin-type domains lie at 54 to 83 (RRYE…IESE) and 93 to 122 (TRYD…ETHI). [4Fe-4S] cluster-binding residues include Cys-63, Cys-66, Cys-69, Cys-73, Cys-102, Cys-105, Cys-108, and Cys-112.

It belongs to the complex I 23 kDa subunit family. NDH-1 is composed of 14 different subunits. Subunits NuoA, H, J, K, L, M, N constitute the membrane sector of the complex. [4Fe-4S] cluster is required as a cofactor.

It localises to the cell inner membrane. It catalyses the reaction a quinone + NADH + 5 H(+)(in) = a quinol + NAD(+) + 4 H(+)(out). Functionally, NDH-1 shuttles electrons from NADH, via FMN and iron-sulfur (Fe-S) centers, to quinones in the respiratory chain. The immediate electron acceptor for the enzyme in this species is believed to be ubiquinone. Couples the redox reaction to proton translocation (for every two electrons transferred, four hydrogen ions are translocated across the cytoplasmic membrane), and thus conserves the redox energy in a proton gradient. This Paraburkholderia xenovorans (strain LB400) protein is NADH-quinone oxidoreductase subunit I.